The following is a 344-amino-acid chain: MDTEMMPKFSSKDEEIDYWKCLSLKYKKSCHDAQEELQEFQEGSRELEAELEAQLGQAEHRIRDLQSENQRLKSEVDILKEKLEQQYAQSYKQISMLEDDLLQTRGIKEQLHKYVRELEQANDDLERAKRATITSLEDFEQRLNQAIERNAFLESELDEKESLLVSVQRLKDEARDLRQELAVRERTSDVTRMSAPSSPTLDIDKTDSAVQASLSLPATPVGKTMEHPFIGTKALTNGCGNGSPLTPSARISALNIVGDLLRKVGALESKLAACRNFAKDQAARKNYTTGNGNLINSNATKFSHSLHTTYFDKTTMNGLDPGALSAAIASPRAVSPPGLLPLSV.

Residues 26 to 189 are a coiled coil; that stretch reads YKKSCHDAQE…ELAVRERTSD (164 aa).

The protein belongs to the nudE family. Phosphorylated in mitosis.

The protein localises to the cytoplasm. Its subcellular location is the cytoskeleton. The protein resides in the microtubule organizing center. It is found in the centrosome. It localises to the spindle. Functionally, required for organization of the cellular microtubule array and microtubule anchoring at the centrosome. Positively regulates the activity of the minus-end directed microtubule motor protein dynein. May enhance dynein-mediated microtubule sliding by targeting dynein to the microtubule plus end. The sequence is that of Nuclear distribution protein nudE-like 1-B (ndel1b) from Danio rerio (Zebrafish).